We begin with the raw amino-acid sequence, 359 residues long: Decorin (359 aa).

Residues 1-16 (MKATIILLLLAQVSWA) form the signal peptide. The propeptide occupies 17–30 (GPFQQRGLFDFMLE). Ser-34 carries O-linked (Xyl...) (glycosaminoglycan) serine glycosylation. 2 disulfides stabilise this stretch: Cys-54–Cys-60 and Cys-58–Cys-67. LRR repeat units lie at residues 73–93 (DKVP…NNKI), 94–117 (TEIK…NNKI), 118–141 (SKVS…KNQL), 142–162 (KELP…ENEI), 163–186 (TKVR…TNPL), 187–212 (KSSG…DTNI), 213–233 (TSIP…GNKI), 234–257 (SRVD…FNSI), 258–281 (SAVD…NNKL), 282–304 (TRVP…NNNI), 305–334 (SVVG…SNPV), and 335–359 (QYWE…GNYK). N-linked (GlcNAc...) asparagine glycosylation occurs at Asn-211. N-linked (GlcNAc...) asparagine glycans are attached at residues Asn-262 and Asn-303. Cysteines 313 and 346 form a disulfide.

This sequence belongs to the small leucine-rich proteoglycan (SLRP) family. SLRP class I subfamily. In terms of assembly, binds to type I and type II collagen, fibronectin and TGF-beta. Forms a ternary complex with MFAP2 and ELN. Interacts with DPT. Post-translationally, the attached glycosaminoglycan chain can be either chondroitin sulfate or dermatan sulfate depending upon the tissue of origin. In terms of tissue distribution, detected in placenta (at protein level). Detected in cerebrospinal fluid, fibroblasts and urine (at protein level).

The protein resides in the secreted. The protein localises to the extracellular space. It is found in the extracellular matrix. Functionally, may affect the rate of fibrils formation. This Homo sapiens (Human) protein is Decorin (DCN).